The sequence spans 312 residues: F-box protein At1g11270 (312 aa).

One can recognise an F-box domain in the interval Ser-29–Met-80.

This chain is F-box protein At1g11270, found in Arabidopsis thaliana (Mouse-ear cress).